The primary structure comprises 214 residues: Small ribosomal subunit protein uS5 (214 aa).

One can recognise an S5 DRBM domain in the interval 54–117 (LKYEVVDIKV…RDAKMNILPV (64 aa)).

It belongs to the universal ribosomal protein uS5 family. Part of the 30S ribosomal subunit. Contacts protein S4.

Functionally, with S4 and S12 plays an important role in translational accuracy. This chain is Small ribosomal subunit protein uS5, found in Saccharolobus islandicus (strain Y.N.15.51 / Yellowstone #2) (Sulfolobus islandicus).